Consider the following 130-residue polypeptide: Sirohydrochlorin cobaltochelatase (130 aa).

The active-site Proton acceptor is His-12. His-12 is a Co(2+) binding site. His-12 contributes to the Ni(2+) binding site. Substrate-binding positions include Glu-48 and Leu-73–His-78. Position 78 (His-78) interacts with Co(2+). His-78 lines the Ni(2+) pocket.

It belongs to the CbiX family. CbiXS subfamily. Homotetramer; dimer of dimers.

The catalysed reaction is Co-sirohydrochlorin + 2 H(+) = sirohydrochlorin + Co(2+). It catalyses the reaction Ni-sirohydrochlorin + 2 H(+) = sirohydrochlorin + Ni(2+). Its pathway is cofactor biosynthesis; adenosylcobalamin biosynthesis; cob(II)yrinate a,c-diamide from sirohydrochlorin (anaerobic route): step 1/10. In terms of biological role, catalyzes the insertion of Co(2+) into sirohydrochlorin as part of the anaerobic pathway to cobalamin biosynthesis (Potential). Involved in the biosynthesis of the unique nickel-containing tetrapyrrole coenzyme F430, the prosthetic group of methyl-coenzyme M reductase (MCR), which plays a key role in methanogenesis and anaerobic methane oxidation. Catalyzes the insertion of Ni(2+) into sirohydrochlorin to yield Ni-sirohydrochlorin. In Methanosarcina acetivorans (strain ATCC 35395 / DSM 2834 / JCM 12185 / C2A), this protein is Sirohydrochlorin cobaltochelatase.